The chain runs to 540 residues: Putative rhamnogalacturonase (540 aa).

The signal sequence occupies residues 1 to 23 (MGFLTLFHMAFLAVSLFVSGALA). 2 disulfide bridges follow: Cys-53/Cys-100 and Cys-192/Cys-203. N-linked (GlcNAc...) asparagine glycosylation occurs at Asn-89. The N-linked (GlcNAc...) asparagine glycan is linked to Asn-368.

Belongs to the polysaccharide lyase 4 family.

It is found in the secreted. It carries out the reaction Endotype eliminative cleavage of L-alpha-rhamnopyranosyl-(1-&gt;4)-alpha-D-galactopyranosyluronic acid bonds of rhamnogalacturonan I domains in ramified hairy regions of pectin leaving L-rhamnopyranose at the reducing end and 4-deoxy-4,5-unsaturated D-galactopyranosyluronic acid at the non-reducing end.. In terms of biological role, could be a pectinolytic enzyme that hydrolyzes the alpha-L-rhamnopyranosyl-(1,4)-alpha-D-galacturonopyranosyl glycosidic linkage by beta-elimination, thereby generating oligosaccharides terminating at the non-reducing end with a hex-4-enopyranosyluronic acid residue. The chain is Putative rhamnogalacturonase (asd-1) from Neurospora crassa (strain ATCC 24698 / 74-OR23-1A / CBS 708.71 / DSM 1257 / FGSC 987).